The following is a 190-amino-acid chain: Copper-binding lipoprotein NosL (190 aa).

An N-terminal signal peptide occupies residues 1 to 23 (MNALHRIGAGTLLAVLLAFGLTG). Cys-24 is lipidated: N-palmitoyl cysteine. Cys-24 carries the S-diacylglycerol cysteine lipid modification. The disordered stretch occupies residues 170 to 190 (MQHGGMHDHAPNGAHNAHAGH). The segment covering 180–190 (PNGAHNAHAGH) has biased composition (low complexity).

Belongs to the NosL family. As to quaternary structure, monomer.

Its subcellular location is the cell membrane. Functionally, may act as a metallochaperone involved in nitrous oxide reductase assembly. Specifically binds Cu(+). This chain is Copper-binding lipoprotein NosL, found in Stutzerimonas stutzeri (Pseudomonas stutzeri).